A 435-amino-acid polypeptide reads, in one-letter code: UDP-N-acetylmuramate--L-alanine ligase (435 aa).

108 to 114 contributes to the ATP binding site; that stretch reads GSHGKTS.

The protein belongs to the MurCDEF family.

Its subcellular location is the cytoplasm. The catalysed reaction is UDP-N-acetyl-alpha-D-muramate + L-alanine + ATP = UDP-N-acetyl-alpha-D-muramoyl-L-alanine + ADP + phosphate + H(+). Its pathway is cell wall biogenesis; peptidoglycan biosynthesis. Functionally, cell wall formation. This is UDP-N-acetylmuramate--L-alanine ligase from Exiguobacterium sp. (strain ATCC BAA-1283 / AT1b).